The primary structure comprises 322 residues: MDYDIDAIIEKLVKARNGKPSKQVQLSDAEIRYLCTTSRSIFLSQPMLLELEAPLKICGDIHGQYSDLLRLFEYGGYPPDANYLFLGDYVDRGKQSLEVICLLFAYKIKYPENFFLLRGNHEFASINRIYGFYDECKRRYSIKLWKTFTDCFNCMPVAAVIDEKIFCMHGGLSPDLNSLDQIQRIIRPTDIPDTGLLCDLVWSDPEKDLTGWGENDRGVSYTFGADVVSRFLQKHDLDLICRAHQVVEDGYEFFGKRQLVTIFSAPNYCGEFDNVGAMMSVNEDLLCSFQILKPAEKRQRVSQSSIKESKSATNSLKKSKNN.

Residues Asp60, His62, Asp88, and Asn120 each coordinate Mn(2+). His121 serves as the catalytic Proton donor. Residues His169 and His244 each contribute to the Mn(2+) site. Residues 298–322 (RQRVSQSSIKESKSATNSLKKSKNN) form a disordered region. Positions 301–316 (VSQSSIKESKSATNSL) are enriched in polar residues.

The protein belongs to the PPP phosphatase family. PP-1 subfamily. Mn(2+) serves as cofactor.

The enzyme catalyses O-phospho-L-seryl-[protein] + H2O = L-seryl-[protein] + phosphate. The catalysed reaction is O-phospho-L-threonyl-[protein] + H2O = L-threonyl-[protein] + phosphate. Essential role in cell cycle control. PP1 is perhaps required for exit from mitosis. This Schizosaccharomyces pombe (strain 972 / ATCC 24843) (Fission yeast) protein is Serine/threonine-protein phosphatase PP1-2 (sds21).